The following is a 145-amino-acid chain: 3-dehydroquinate dehydratase (145 aa).

Residue Tyr-22 is the Proton acceptor of the active site. Residues Asn-71, His-77, and Asp-84 each coordinate substrate. His-97 (proton donor) is an active-site residue. Substrate-binding positions include Ile-98 to Ser-99 and Arg-108.

Belongs to the type-II 3-dehydroquinase family. In terms of assembly, homododecamer.

The enzyme catalyses 3-dehydroquinate = 3-dehydroshikimate + H2O. It functions in the pathway metabolic intermediate biosynthesis; chorismate biosynthesis; chorismate from D-erythrose 4-phosphate and phosphoenolpyruvate: step 3/7. Functionally, catalyzes a trans-dehydration via an enolate intermediate. The chain is 3-dehydroquinate dehydratase from Exiguobacterium sp. (strain ATCC BAA-1283 / AT1b).